Here is a 241-residue protein sequence, read N- to C-terminus: MSRGVSSFSIHNDSAADTKRIGYGMGEKSSAGSSRDQTYSVKPASDVKDKKKVSESHTFQVSENYRLTQTFGRLYSPIPFGRESRSKREYTLDYGMNNKSAIKFVFHGKEELKVNGGKVSVVVDKFKKSDKGAMDKLAQKFLTSIKKEKVETLFPVSLKLRLKLKESGEEYQTANINNNLSGHMVKDYSDLDKVVRQVLKSFFDLMPKDTDEGLVLFSEFIKQEAKPGSTIVPILIDYDTE.

The tract at residues 19 to 53 (KRIGYGMGEKSSAGSSRDQTYSVKPASDVKDKKKV) is disordered. Positions 30–39 (SAGSSRDQTY) are enriched in polar residues.

This is an uncharacterized protein from Ostreid herpesvirus 1 (isolate France) (OsHV-1).